We begin with the raw amino-acid sequence, 87 residues long: Sec-independent protein translocase protein TatA (87 aa).

Residues 1 to 21 traverse the membrane as a helical segment; it reads MGSFSIWHWLIVLLIVVMVFG. The disordered stretch occupies residues 40-87; the sequence is KDGMKDGSTPEGTPASTTAATPPAGQVTNQQAHAADPGTIDVEAKHKG. The segment covering 46-64 has biased composition (low complexity); sequence GSTPEGTPASTTAATPPAG.

The protein belongs to the TatA/E family. As to quaternary structure, the Tat system comprises two distinct complexes: a TatABC complex, containing multiple copies of TatA, TatB and TatC subunits, and a separate TatA complex, containing only TatA subunits. Substrates initially bind to the TatABC complex, which probably triggers association of the separate TatA complex to form the active translocon.

Its subcellular location is the cell inner membrane. Part of the twin-arginine translocation (Tat) system that transports large folded proteins containing a characteristic twin-arginine motif in their signal peptide across membranes. TatA could form the protein-conducting channel of the Tat system. This Paracidovorax citrulli (strain AAC00-1) (Acidovorax citrulli) protein is Sec-independent protein translocase protein TatA.